Here is a 909-residue protein sequence, read N- to C-terminus: E3 ubiquitin-protein ligase HACE1 (909 aa).

Residues 1-21 (MERAMEQLNRLTRSLRRARTV) form an N-terminal helix important for homodimerization region. ANK repeat units lie at residues 23–55 (LPED…NSKF), 64–93 (VKRS…NPNY), 97–126 (SGCT…DVNI), 130–159 (EGLT…DVDV), 163–192 (MGQT…DINR), 196–226 (SGAT…YLPD), and 228–253 (NGVT…QYHP). The tract at residues 398–433 (QDQDAASIPPFEPPGPGSYENLSTGTRESKPDALAG) is disordered. The region spanning 574–909 (NCAKLKQGIA…HCGSYGYTMA (336 aa)) is the HECT domain. The active-site Glycyl thioester intermediate is the C876.

In terms of assembly, homodimer. The homodimer is autoinhibited and stabilized by its N-terminal helix. Interacts with RAB1 (RAB1A, RAB1B or RAB1C), RAB4 (RAB4A or RAB4B) and RAB11 (RAB11A or RAB11B); in a GTP-dependent manner. Interacts with the 26S proteasomal complex through the 20S core proteasomal subunit. Interacts with RARB. In terms of processing, autoubiquitinated. Expressed in multiple tissues including heart, brain and kidney.

Its subcellular location is the golgi apparatus. It is found in the golgi stack membrane. The protein resides in the cytoplasm. The protein localises to the endoplasmic reticulum. The catalysed reaction is S-ubiquitinyl-[E2 ubiquitin-conjugating enzyme]-L-cysteine + [acceptor protein]-L-lysine = [E2 ubiquitin-conjugating enzyme]-L-cysteine + N(6)-ubiquitinyl-[acceptor protein]-L-lysine.. Its pathway is protein modification; protein ubiquitination. Its activity is regulated as follows. Sterically autoinhibited in its dimeric state. Functionally, E3 ubiquitin-protein ligase involved in Golgi membrane fusion and regulation of small GTPases. Acts as a regulator of Golgi membrane dynamics during the cell cycle: recruited to Golgi membrane by Rab proteins and regulates postmitotic Golgi membrane fusion. Acts by mediating ubiquitination during mitotic Golgi disassembly, ubiquitination serving as a signal for Golgi reassembly later, after cell division. Specifically binds GTP-bound RAC1, mediating ubiquitination and subsequent degradation of active RAC1, thereby playing a role in host defense against pathogens. May also act as a transcription regulator via its interaction with RARB. This Homo sapiens (Human) protein is E3 ubiquitin-protein ligase HACE1 (HACE1).